The primary structure comprises 176 residues: ATP-dependent protease subunit HslV (176 aa).

Residue threonine 2 is part of the active site. The Na(+) site is built by glycine 157, cysteine 160, and threonine 163.

The protein belongs to the peptidase T1B family. HslV subfamily. In terms of assembly, a double ring-shaped homohexamer of HslV is capped on each side by a ring-shaped HslU homohexamer. The assembly of the HslU/HslV complex is dependent on binding of ATP.

Its subcellular location is the cytoplasm. The enzyme catalyses ATP-dependent cleavage of peptide bonds with broad specificity.. Its activity is regulated as follows. Allosterically activated by HslU binding. Functionally, protease subunit of a proteasome-like degradation complex believed to be a general protein degrading machinery. This chain is ATP-dependent protease subunit HslV, found in Enterobacter sp. (strain 638).